Consider the following 157-residue polypeptide: Phosphopantetheine adenylyltransferase (157 aa).

Serine 8 is a binding site for substrate. Residues 8–9 and histidine 16 contribute to the ATP site; that span reads SF. Lysine 40, threonine 72, and arginine 86 together coordinate substrate. ATP is bound by residues 87–89, glutamate 97, and 122–128; these read GLR and YSFLSSS.

It belongs to the bacterial CoaD family. In terms of assembly, homohexamer. Mg(2+) serves as cofactor.

Its subcellular location is the cytoplasm. The enzyme catalyses (R)-4'-phosphopantetheine + ATP + H(+) = 3'-dephospho-CoA + diphosphate. The protein operates within cofactor biosynthesis; coenzyme A biosynthesis; CoA from (R)-pantothenate: step 4/5. In terms of biological role, reversibly transfers an adenylyl group from ATP to 4'-phosphopantetheine, yielding dephospho-CoA (dPCoA) and pyrophosphate. In Crocosphaera subtropica (strain ATCC 51142 / BH68) (Cyanothece sp. (strain ATCC 51142)), this protein is Phosphopantetheine adenylyltransferase.